A 424-amino-acid chain; its full sequence is Tyrosine--tRNA ligase (424 aa).

Tyr-37 serves as a coordination point for L-tyrosine. Residues 42 to 51 (PTADSLHLGH) carry the 'HIGH' region motif. Lys-144 is subject to N6-acetyllysine. Residues Tyr-175 and Gln-179 each contribute to the L-tyrosine site. Positions 235–239 (KFGKT) match the 'KMSKS' region motif. Lys-238 contacts ATP. Positions 357–414 (ADLMQALVDSELQPSRGQARKTIASNAVTINGEKQSDPEYFFKEEDRLFGRFTLLRRG) constitute an S4 RNA-binding domain.

Belongs to the class-I aminoacyl-tRNA synthetase family. TyrS type 1 subfamily. In terms of assembly, homodimer.

It is found in the cytoplasm. It carries out the reaction tRNA(Tyr) + L-tyrosine + ATP = L-tyrosyl-tRNA(Tyr) + AMP + diphosphate + H(+). Functionally, catalyzes the attachment of tyrosine to tRNA(Tyr) in a two-step reaction: tyrosine is first activated by ATP to form Tyr-AMP and then transferred to the acceptor end of tRNA(Tyr). The sequence is that of Tyrosine--tRNA ligase from Escherichia fergusonii (strain ATCC 35469 / DSM 13698 / CCUG 18766 / IAM 14443 / JCM 21226 / LMG 7866 / NBRC 102419 / NCTC 12128 / CDC 0568-73).